The sequence spans 496 residues: Glycerol kinase (496 aa).

Thr-12 is an ADP binding site. Residues Thr-12, Thr-13, and Ser-14 each coordinate ATP. Thr-12 is a binding site for sn-glycerol 3-phosphate. Residue Arg-16 coordinates ADP. Arg-82, Glu-83, and Tyr-134 together coordinate sn-glycerol 3-phosphate. Residues Arg-82, Glu-83, and Tyr-134 each coordinate glycerol. At His-230 the chain carries Phosphohistidine; by HPr. Asp-244 provides a ligand contact to sn-glycerol 3-phosphate. Glycerol is bound by residues Asp-244 and Gln-245. Positions 266 and 309 each coordinate ADP. The ATP site is built by Thr-266, Gly-309, Gln-313, and Gly-410. ADP-binding residues include Gly-410 and Asn-414.

It belongs to the FGGY kinase family. As to quaternary structure, homotetramer and homodimer (in equilibrium). Post-translationally, the phosphoenolpyruvate-dependent sugar phosphotransferase system (PTS), including enzyme I, and histidine-containing protein (HPr) are required for the phosphorylation, which leads to the activation of the enzyme.

It catalyses the reaction glycerol + ATP = sn-glycerol 3-phosphate + ADP + H(+). The protein operates within polyol metabolism; glycerol degradation via glycerol kinase pathway; sn-glycerol 3-phosphate from glycerol: step 1/1. Its activity is regulated as follows. Activated by phosphorylation and inhibited by fructose 1,6-bisphosphate (FBP). Key enzyme in the regulation of glycerol uptake and metabolism. Catalyzes the phosphorylation of glycerol to yield sn-glycerol 3-phosphate. The polypeptide is Glycerol kinase (Bacillus thuringiensis subsp. konkukian (strain 97-27)).